We begin with the raw amino-acid sequence, 723 residues long: Methionine--tRNA ligase (723 aa).

A 'HIGH' region motif is present at residues Pro-11–His-21. Residues Cys-143, Cys-146, Cys-156, and Cys-159 each coordinate Zn(2+). The 'KMSKS' region motif lies at Lys-344–Ser-348. Thr-347 is an ATP binding site. The region spanning Asp-623–Arg-723 is the tRNA-binding domain.

This sequence belongs to the class-I aminoacyl-tRNA synthetase family. MetG type 1 subfamily. Homodimer. It depends on Zn(2+) as a cofactor.

The protein resides in the cytoplasm. The catalysed reaction is tRNA(Met) + L-methionine + ATP = L-methionyl-tRNA(Met) + AMP + diphosphate. Functionally, is required not only for elongation of protein synthesis but also for the initiation of all mRNA translation through initiator tRNA(fMet) aminoacylation. In Pyrococcus horikoshii (strain ATCC 700860 / DSM 12428 / JCM 9974 / NBRC 100139 / OT-3), this protein is Methionine--tRNA ligase.